The following is a 313-amino-acid chain: Ribosomal RNA small subunit methyltransferase H (313 aa).

S-adenosyl-L-methionine is bound by residues 35–37 (GGH), aspartate 55, phenylalanine 79, aspartate 101, and glutamine 108.

The protein belongs to the methyltransferase superfamily. RsmH family.

It localises to the cytoplasm. It catalyses the reaction cytidine(1402) in 16S rRNA + S-adenosyl-L-methionine = N(4)-methylcytidine(1402) in 16S rRNA + S-adenosyl-L-homocysteine + H(+). Its function is as follows. Specifically methylates the N4 position of cytidine in position 1402 (C1402) of 16S rRNA. The polypeptide is Ribosomal RNA small subunit methyltransferase H (Shigella flexneri).